Consider the following 1081-residue polypeptide: Zinc finger protein 827 (1081 aa).

Residues 1-10 (MPRRKQEQPK) are compositionally biased toward basic and acidic residues. The segment at 1–14 (MPRRKQEQPKRLPS) is mediates direct interaction with RBBP4. Positions 1-77 (MPRRKQEQPK…DTSLGSTTPS (77 aa)) are disordered. Positions 3 to 5 (RRK) match the RRK motif; mediates NuRD recruitment to telomeres motif. Positions 62–77 (EQSTSPDTSLGSTTPS) are enriched in polar residues. Residues lysine 176, lysine 216, and lysine 226 each participate in a glycyl lysine isopeptide (Lys-Gly) (interchain with G-Cter in SUMO2) cross-link. Disordered stretches follow at residues 258-280 (KKVS…SFLS) and 305-348 (EKSS…SLEL). Residues 327–344 (VSPPPPPPPPPPPPPPPQ) are compositionally biased toward pro residues. Glycyl lysine isopeptide (Lys-Gly) (interchain with G-Cter in SUMO2) cross-links involve residues lysine 360 and lysine 372. 3 consecutive C2H2-type zinc fingers follow at residues 374–396 (FQCP…MVIH), 402–424 (HQCP…MKVH), and 433–455 (FQCQ…MRCH). Glycyl lysine isopeptide (Lys-Gly) (interchain with G-Cter in SUMO2) cross-links involve residues lysine 466, lysine 475, lysine 523, lysine 549, lysine 580, lysine 587, and lysine 597. Residues 525 to 553 (EPKEDNGLPTSFTLNTADRPANHTKLKDP) are disordered. Over residues 616–627 (VFSPESEVSTPG) the composition is skewed to polar residues. Residues 616–640 (VFSPESEVSTPGVSEDALKPQEGKG) are disordered. The segment covering 631–640 (DALKPQEGKG) has biased composition (basic and acidic residues). Residues lysine 634, lysine 639, and lysine 658 each participate in a glycyl lysine isopeptide (Lys-Gly) (interchain with G-Cter in SUMO2) cross-link. Residue lysine 673 forms a Glycyl lysine isopeptide (Lys-Gly) (interchain with G-Cter in SUMO1); alternate linkage. Residue lysine 673 forms a Glycyl lysine isopeptide (Lys-Gly) (interchain with G-Cter in SUMO2); alternate linkage. Residues lysine 704, lysine 710, lysine 742, lysine 778, and lysine 798 each participate in a glycyl lysine isopeptide (Lys-Gly) (interchain with G-Cter in SUMO2) cross-link. C2H2-type zinc fingers lie at residues 817 to 839 (FPCD…LSLH) and 845 to 867 (YKCH…LTVH). Glycyl lysine isopeptide (Lys-Gly) (interchain with G-Cter in SUMO2) cross-links involve residues lysine 870 and lysine 891. C2H2-type zinc fingers lie at residues 897 to 919 (YSCH…MSLH) and 929 to 952 (ICCT…GTKH). Basic and acidic residues predominate over residues 947–960 (HIGTKHTGEDRKTP). The segment at 947 to 1013 (HIGTKHTGED…GSQPSLNSEE (67 aa)) is disordered. Residue lysine 958 forms a Glycyl lysine isopeptide (Lys-Gly) (interchain with G-Cter in SUMO2) linkage. Positions 961–978 (SESNSPSSSSLSALSDSA) are enriched in low complexity. The span at 979-988 (NSKDDSDGSQ) shows a compositional bias: basic and acidic residues. Lysine 1014 participates in a covalent cross-link: Glycyl lysine isopeptide (Lys-Gly) (interchain with G-Cter in SUMO2). 2 C2H2-type zinc fingers span residues 1019 to 1041 (FECV…LQIH) and 1047 to 1069 (FECD…KKCH).

The protein belongs to the krueppel C2H2-type zinc-finger protein family. As to quaternary structure, part of a transcription inhibitory ribonucleoprotein complex composed at least of the circular RNA circZNF827, HNRNPK and HNRNPL. Interacts with the nucleosome remodeling and histone deacetylase/NuRD complex. Interacts with RBBP4; the interaction is direct and recruits RBBP4, a component of the NuRD complex, to telomeres.

Its subcellular location is the nucleus. The protein localises to the chromosome. It localises to the telomere. In terms of biological role, as part of a ribonucleoprotein complex composed at least of HNRNPK, HNRNPL and the circular RNA circZNF827 that nucleates the complex on chromatin, may negatively regulate the transcription of genes involved in neuronal differentiation. Could also recruit the nucleosome remodeling and histone deacetylase/NuRD complex to telomeric regions of chromosomes to regulate chromatin remodeling as part of telomere maintenance. The chain is Zinc finger protein 827 (ZNF827) from Macaca fascicularis (Crab-eating macaque).